The primary structure comprises 454 residues: UDP-N-acetylmuramate--L-alanine ligase (454 aa).

109 to 115 (GTHGKTT) is a binding site for ATP.

This sequence belongs to the MurCDEF family.

The protein resides in the cytoplasm. The catalysed reaction is UDP-N-acetyl-alpha-D-muramate + L-alanine + ATP = UDP-N-acetyl-alpha-D-muramoyl-L-alanine + ADP + phosphate + H(+). Its pathway is cell wall biogenesis; peptidoglycan biosynthesis. Its function is as follows. Cell wall formation. In Protochlamydia amoebophila (strain UWE25), this protein is UDP-N-acetylmuramate--L-alanine ligase.